A 180-amino-acid chain; its full sequence is uncharacterized protein (180 aa).

An N-terminal signal peptide occupies residues 1 to 21; sequence MKQCIAFMAILALSLSAISEA. The interval 23-81 is disordered; it reads GGRGVRSSGYSRPVATKPAPAPKQTQTQQQSQQPDATFGQQNMQNTATNTPNNPNNRLA. Residues 27 to 78 are compositionally biased toward low complexity; the sequence is VRSSGYSRPVATKPAPAPKQTQTQQQSQQPDATFGQQNMQNTATNTPNNPNN.

This is an uncharacterized protein from Pasteurella multocida (strain Pm70).